A 392-amino-acid polypeptide reads, in one-letter code: 6-aminohexanoate-dimer hydrolase (392 aa).

Residues 1-27 (MNTPTTGSHPARYPSAAAGEPTLDSWQ) form a disordered region. Serine 112 is an active-site residue.

The catalysed reaction is [N-(6-aminohexanoyl)](n) + H2O = [N-(6-aminohexanoyl)](n-1) + 6-aminohexanoate. The enzyme catalyses N-(6-aminohexanoyl)-6-aminohexanoate + H2O = 2 6-aminohexanoate. It functions in the pathway xenobiotic degradation; nylon-6 oligomer degradation. Involved in nylon oligomer degradation. The sequence is that of 6-aminohexanoate-dimer hydrolase from Paenarthrobacter ureafaciens.